The chain runs to 77 residues: Putative ankyrin repeat protein RC0956 (77 aa).

Residues 8–38 (TDISPLMLASEYGQVTIVKYLLKHGNYNVKG) form an ANK repeat.

This is Putative ankyrin repeat protein RC0956 from Rickettsia conorii (strain ATCC VR-613 / Malish 7).